We begin with the raw amino-acid sequence, 144 residues long: Transcriptional regulator SlyA (144 aa).

The HTH marR-type domain maps to 2 to 135 (ESPLGSDLAR…LITLIAKLEH (134 aa)). The segment at residues 49-72 (QIQLAKAIGIEQPSLVRTLDQLEE) is a DNA-binding region (H-T-H motif).

The protein belongs to the SlyA family. As to quaternary structure, homodimer.

In terms of biological role, transcription regulator that can specifically activate or repress expression of target genes. This chain is Transcriptional regulator SlyA, found in Escherichia coli (strain 55989 / EAEC).